The chain runs to 349 residues: Protein AMBP (349 aa).

Residues 1–19 (MQGLRTLFLLLTACLASRA) form the signal peptide. Asn-33 carries N-linked (GlcNAc...) asparagine glycosylation. 3-hydroxy-L-kynurenine contacts are provided by Cys-52 and Lys-110. A disulfide bond links Cys-90 and Cys-187. An N-linked (GlcNAc...) asparagine glycan is attached at Asn-114. Residues Lys-136 and Lys-148 each contribute to the 3-hydroxy-L-kynurenine site. An O-linked (Xyl...) (chondroitin sulfate) serine glycan is attached at Ser-214. 6 cysteine pairs are disulfide-bonded: Cys-230–Cys-280, Cys-239–Cys-263, Cys-255–Cys-276, Cys-286–Cys-336, Cys-295–Cys-319, and Cys-311–Cys-332. 2 BPTI/Kunitz inhibitor domains span residues 230–280 (CQLN…LQTC) and 286–336 (CNLP…KEYC). Asn-233 carries an N-linked (GlcNAc...) asparagine glycan.

It in the N-terminal section; belongs to the calycin superfamily. Lipocalin family. As to quaternary structure, monomer. Homodimer. In plasma, it occurs as a monomer or dimer and in covalently-linked complexes with immunoglobulin A (IgA), ALB/albumin and F2/prothrombin. Chromophore-bound alpha-1-microglobulin interacts with the constant region of immunoglobulin A. Chromophore-bound alpha-1-microglobulin interacts with ALB with molar ratio 2:1 and 1:1; this interaction does not prevent fatty acid binding to ALB. Interacts with F2/prothrombin (via N-terminus) with molar ratio 2:1 and 1:1; this interaction does not prevent the activation of prothrombin to thrombin. Interacts with NDUFAB1, a subunit of mitochondrial complex I. Interacts with FN1. I-alpha-I plasma protease inhibitors are assembled from one or two heavy chains (HC) and one light chain, bikunin. Inter-alpha-inhibitor (I-alpha-I) is composed of ITIH1/HC1, ITIH2/HC2 and bikunin, and pre-alpha-inhibitor (P-alpha-I) of ITIH3/HC3 and bikunin. Interacts with TNFAIP6 (via Link domain). In terms of assembly, monomer. Also occurs as a complex with tryptase in mast cells. In terms of processing, the precursor is proteolytically processed into separately functioning proteins. 3-hydroxykynurenine, an oxidized tryptophan metabolite that is common in biological fluids, reacts with Cys-53, Lys-111, Lys-137, and Lys-149 to form heterogeneous polycyclic chromophores including hydroxanthommatin. The reaction by alpha-1-microglobulin is autocatalytic; the human protein forms chromophore even when expressed in insect and bacterial cells. The chromophore can react with accessible cysteines forming non-reducible thioether cross-links with other molecules of alpha-1-microglobulin or with other proteins such as Ig alpha-1 chain C region 'Cys-352'. Post-translationally, heavy chains are interlinked with bikunin via a chondroitin 4-sulfate bridge to the C-terminal aspartate. In terms of processing, proteolytically cleaved by PRSS3 at Kunitz domain 2. Expressed by the liver and secreted in plasma (at protein level).

Its subcellular location is the secreted. The protein localises to the endoplasmic reticulum. The protein resides in the cytoplasm. It localises to the cytosol. It is found in the cell membrane. Its subcellular location is the nucleus membrane. The protein localises to the mitochondrion inner membrane. The protein resides in the extracellular space. It localises to the extracellular matrix. In terms of biological role, antioxidant and tissue repair protein with reductase, heme-binding and radical-scavenging activities. Removes and protects against harmful oxidants and repairs macromolecules in intravascular and extravascular spaces and in intracellular compartments. Intravascularly, plays a regulatory role in red cell homeostasis by preventing heme- and reactive oxygen species-induced cell damage. Binds and degrades free heme to protect fetal and adult red blood cells from hemolysis. Reduces extracellular methemoglobin, a Fe3+ (ferric) form of hemoglobin that cannot bind oxygen, back to the Fe2+ (ferrous) form deoxyhemoglobin, which has oxygen-carrying potential. Upon acute inflammation, inhibits oxidation of low-density lipoprotein particles by MPO and limits vascular damage. Extravascularly, protects from oxidation products formed on extracellular matrix structures and cell membranes. Catalyzes the reduction of carbonyl groups on oxidized collagen fibers and preserves cellular and extracellular matrix ultrastructures. Importantly, counteracts the oxidative damage at blood-placenta interface, preventing leakage of free fetal hemoglobin into the maternal circulation. Intracellularly, has a role in maintaining mitochondrial redox homeostasis. Bound to complex I of the respiratory chain of mitochondria, may scavenge free radicals and preserve mitochondrial ATP synthesis. Protects renal tubule epithelial cells from heme-induced oxidative damage to mitochondria. Reduces cytochrome c from Fe3+ (ferric) to the Fe2+ (ferrous) state through formation of superoxide anion radicals in the presence of ascorbate or NADH/NADPH electron donor cofactors, ascorbate being the preferred cofactor. Has a chaperone role in facilitating the correct folding of bikunin in the endoplasmic reticulum compartment. Functionally, kunitz-type serine protease inhibitor and structural component of extracellular matrix with a role in extracellular space remodeling and cell adhesion. Among others, has antiprotease activity toward kallikrein, a protease involved in airway inflammation; inhibits GZMK/granzyme, a granule-stored serine protease involved in NK and T cell cytotoxic responses; and inhibits PLG/plasmin, a protease required for activation of matrix metalloproteinases. As part of I-alpha-I complex, provides for the heavy chains to be transferred from I-alpha-I complex to hyaluronan in the presence of TNFAIP6, in a dynamic process that releases free bikunin and remodels extracellular matrix proteoglycan structures. Free bikunin, but not its heavy chain-bound form, acts as a potent protease inhibitor in airway secretions. Part of hyaluronan-rich extracellular matrix that surrounds oocyte during cumulus oophorus expansion, an indispensable process for proper ovulation. Also inhibits calcium oxalate crystallization. Its function is as follows. Kunitz-type serine protease inhibitor. Has high catalytic efficiency for F10/blood coagulation factor Xa and may act as an anticoagulant by inhibiting prothrombin activation. Inhibits trypsin and mast cell CMA1/chymase and tryptase proteases. The chain is Protein AMBP (Ambp) from Mus musculus (Mouse).